The primary structure comprises 508 residues: O-acetyltransferase pigM (508 aa).

Residues 166–188 form a disordered region; sequence TPAPDERGKISPSLEDAAGSPRT.

The protein operates within secondary metabolite biosynthesis. O-acetyltransferase; part of the gene cluster that mediates the biosynthesis of azaphilone pigments (MonAzPs), a complex mixture of compounds with a common azaphilone skeleton very widely used as food colorants. PigM and pigO are involved in the elimination of the omega-1 alcohol with pigM acting as an O-acetyltransferase that synthesizes the O-11 acetyl intermediate whereas pigO eliminates acetic acid to yield an intermediate with a C10(11) double bond. The first step of the pathway is performed by the nrPKS pigA that forms the hexaketide precursor from successive condensations of five malonyl-CoA units, with a simple acetyl-CoA starter unit. The role of esterase pigG is not clear, but it may play at most a supplementary role in the formation of the benzaldehyde produced by the pigA nrPKS. This very reactive benzaldehyde is intercepted by the pigC ketoreductase that to provide the first stable enzyme-free MonAzPs intermediate, 6-(4-hydroxy-2-oxopentyl)-3-methyl-2,4-dioxocyclohexane carbaldehyde, also known as M7PKS-1. The FAD-dependent monooxygenase pigN hydroxylates M7PKS-1 at C-4, which triggers the formation of the pyran ring. PigJ, pigK and pigD are involved in the acetylation of the pyran ring. PigJ and pigK form the two subunits of a dedicated fungal FAS that produces the side chain fatty acyl moiety of MonAzPs and pigD transfers the fatty acyl chain to the C-4 alcohol. PigM and pigO are involved in the elimination of the omega-1 alcohol. PigM acts as an O-acetyltransferase that synthesizes the putative O-11 acetyl intermediate whereas pigO eliminates acetic acid to yield an intermediate with a C10(11) double bond. The dehydration of the C-11 alcohol followed by the reduction of the C6(7) double bond by the NAD(P)H-dependent oxidoreductase pigE increases the electrophilicity of the C-5 ketone of the resulting acyl benzopyran. This in turn sets up the C-5 ketone for an intramolecular Knoevenagel aldol condensation with the C-20 enol of the side chain. This condensation affords the characteristic linear tricyclic carbon skeletons of the yellow pigments that serve as the common precursors for the classical yellow pigments monascin and ankaflavin, orange pigments rubopunctatin and monascorubrin, and red pigments ribropunctamine and monascorubramine. The FAD-dependent oxidoreductase pigF is especially invoved in the biosynthesis of orange and red pigments via desaturation of C6(7). The protein is O-acetyltransferase pigM of Monascus ruber (Mold).